The following is a 426-amino-acid chain: Glucose-1-phosphate adenylyltransferase (426 aa).

Alpha-D-glucose 1-phosphate contacts are provided by residues G165, 180 to 181, and S191; that span reads EK.

This sequence belongs to the bacterial/plant glucose-1-phosphate adenylyltransferase family. Homotetramer.

The enzyme catalyses alpha-D-glucose 1-phosphate + ATP + H(+) = ADP-alpha-D-glucose + diphosphate. It participates in glycan biosynthesis; glycogen biosynthesis. Functionally, involved in the biosynthesis of ADP-glucose, a building block required for the elongation reactions to produce glycogen. Catalyzes the reaction between ATP and alpha-D-glucose 1-phosphate (G1P) to produce pyrophosphate and ADP-Glc. This is Glucose-1-phosphate adenylyltransferase from Ruminiclostridium cellulolyticum (strain ATCC 35319 / DSM 5812 / JCM 6584 / H10) (Clostridium cellulolyticum).